The sequence spans 292 residues: Glycine--tRNA ligase alpha subunit (292 aa).

It belongs to the class-II aminoacyl-tRNA synthetase family. As to quaternary structure, tetramer of two alpha and two beta subunits.

Its subcellular location is the cytoplasm. It carries out the reaction tRNA(Gly) + glycine + ATP = glycyl-tRNA(Gly) + AMP + diphosphate. The sequence is that of Glycine--tRNA ligase alpha subunit from Syntrophus aciditrophicus (strain SB).